A 134-amino-acid chain; its full sequence is Fluoride-specific ion channel FluC (134 aa).

Helical transmembrane passes span 7–27, 38–58, 69–89, and 110–130; these read LAVA…TIMA, GTLL…IVLV, LFLF…AAES, and VGSL…LLGH. Positions 77 and 80 each coordinate Na(+).

This sequence belongs to the fluoride channel Fluc/FEX (TC 1.A.43) family.

The protein localises to the cell inner membrane. It catalyses the reaction fluoride(in) = fluoride(out). Its activity is regulated as follows. Na(+) is not transported, but it plays an essential structural role and its presence is essential for fluoride channel function. Functionally, fluoride-specific ion channel. Important for reducing fluoride concentration in the cell, thus reducing its toxicity. This is Fluoride-specific ion channel FluC from Legionella pneumophila (strain Paris).